We begin with the raw amino-acid sequence, 397 residues long: MPRPGQPRPSSGPPRLGPWERPSELCLETNDERSQPPPGRRTRRPDPKDPGHHGPESITFISGSAEPANEPPTCCLLWRPWGWDWCRAAFCFRRCRDCLQRCGACVRGCSPCLSAGDPIEGSAEAAWAKEHNGVPPSPDRAPPSRRDGQRLKTSMGSSFSYPDVKLKGIPVYPYRHATSPVPDVDSCCKEPLAEPPPTRHSLPSTFTNSPRGSEEYYSFHESDLDLPEMGSGSMSSREIDVLIFKKLTELFSVHQIDELAKCTSDTVFLEKTSKISDLISSITQDYHLDEQDAEGRLVRGIIRISTRKSRSRPQTSEGRSARSTAPAAAPDSGHETMLGSGLSQDELTVQISQETTADAIARKLRPYGAPGYPASQDSSFQGTDTDSSGAPLLQVYC.

The segment covering 1–16 (MPRPGQPRPSSGPPRL) has biased composition (pro residues). 3 disordered regions span residues 1-67 (MPRP…SAEP), 130-158 (EHNGVPPSPDRAPPSRRDGQRLKTSMGSS), and 192-214 (LAEPPPTRHSLPSTFTNSPRGSE). Positions 44 to 55 (RPDPKDPGHHGP) are enriched in basic and acidic residues. The segment covering 201–211 (SLPSTFTNSPR) has biased composition (polar residues). Ser-218 carries the post-translational modification Phosphoserine. Disordered regions lie at residues 304 to 339 (ISTRKSRSRPQTSEGRSARSTAPAAAPDSGHETMLG) and 361 to 392 (ARKLRPYGAPGYPASQDSSFQGTDTDSSGAPL). Residues 321–330 (ARSTAPAAAP) show a composition bias toward low complexity. Polar residues predominate over residues 375-388 (SQDSSFQGTDTDSS).

It is found in the cytoplasm. The protein localises to the cell junction. In terms of biological role, plays a role in the regulation of the epidermis formation during early development. Required both as an inhibitor of basal cell proliferation and a promoter of differentiation of basal progenitor cell progeny. The sequence is that of Keratinocyte differentiation factor 1 (Kdf1) from Mus musculus (Mouse).